Here is a 241-residue protein sequence, read N- to C-terminus: MEAAADGPAETQSPVQKDSPAKTQSPAQDTSIMSRNNADTGRVLALPEHKKKRKGNLPAESVKILRDWMYKHRFKAYPSEEEKQMLSEKTNLSLLQISNWFINARRRILPDMLQQHRNDPIIGHKTGKDAHATHLQSTEASVPAKSGPSGPDNVQSLPLWPLPKGQMSREKQPDPESAPSQKLTGIAQPKKKVKVSITSPSSPELVSPEEYADFSSFLLLVDAAVQRAAELELEKKQEPNP.

Disordered regions lie at residues 1-58 and 125-207; these read MEAA…GNLP and KTGK…ELVS. A compositionally biased stretch (polar residues) spans 10 to 39; it reads ETQSPVQKDSPAKTQSPAQDTSIMSRNNAD. Positions 48–111 form a DNA-binding region, homeobox; TALE-type; that stretch reads EHKKKRKGNL…INARRRILPD (64 aa).

Belongs to the TALE/TGIF homeobox family.

It localises to the nucleus. In terms of biological role, may have a transcription role in testis. The protein is Homeobox protein TGIF2LX (TGIF2LX) of Pan troglodytes (Chimpanzee).